The primary structure comprises 380 residues: Tryptophan 2,3-dioxygenase (380 aa).

Substrate is bound by residues 57–61 (FIITH) and R128. Position 313 (H313) interacts with heme. T328 contacts substrate.

The protein belongs to the tryptophan 2,3-dioxygenase family. Homotetramer. Dimer of dimers. Requires heme as cofactor.

It catalyses the reaction L-tryptophan + O2 = N-formyl-L-kynurenine. Its pathway is amino-acid degradation; L-tryptophan degradation via kynurenine pathway; L-kynurenine from L-tryptophan: step 1/2. The protein operates within pigment biosynthesis; ommochrome biosynthesis. Its function is as follows. Heme-dependent dioxygenase that catalyzes the oxidative cleavage of the L-tryptophan (L-Trp) pyrrole ring and converts L-tryptophan to N-formyl-L-kynurenine. Catalyzes the oxidative cleavage of the indole moiety. The sequence is that of Tryptophan 2,3-dioxygenase from Drosophila virilis (Fruit fly).